Reading from the N-terminus, the 222-residue chain is MKFFIDTANLDEIRSAAELGVLDGVTTNPSLIAKIVGDPSNFTYGDFKEHIRRICEIVDGPVSAEVTCLKAEEMIAQGEDLAAIHENVVVKCPLTIDGLKAIKHFSASGIRTNATLVFSPNQALLAAKAGADYVSPFVGRLDDISTDGMELVEQIVTIYDNYGYPTEVIVASVRHPQHVVTAAMMGADIATIPYSVIKQLANHPLTDAGLTKFMDDAAVMKK.

Lys-91 functions as the Schiff-base intermediate with substrate in the catalytic mechanism.

This sequence belongs to the transaldolase family. Type 3B subfamily.

It localises to the cytoplasm. The enzyme catalyses D-sedoheptulose 7-phosphate + D-glyceraldehyde 3-phosphate = D-erythrose 4-phosphate + beta-D-fructose 6-phosphate. The protein operates within carbohydrate degradation; pentose phosphate pathway; D-glyceraldehyde 3-phosphate and beta-D-fructose 6-phosphate from D-ribose 5-phosphate and D-xylulose 5-phosphate (non-oxidative stage): step 2/3. Its function is as follows. Transaldolase is important for the balance of metabolites in the pentose-phosphate pathway. In Chlorobium limicola (strain DSM 245 / NBRC 103803 / 6330), this protein is Probable transaldolase.